Consider the following 86-residue polypeptide: Large ribosomal subunit protein bL27 (86 aa).

The interval 1 to 24 (MAHKKAGGSSRNGRDSEGRRLGVK) is disordered.

The protein belongs to the bacterial ribosomal protein bL27 family.

The protein is Large ribosomal subunit protein bL27 of Magnetococcus marinus (strain ATCC BAA-1437 / JCM 17883 / MC-1).